We begin with the raw amino-acid sequence, 351 residues long: Synaptonemal complex central element protein 1 (351 aa).

Polar residues predominate over residues 1–10; the sequence is MAGRSLTSKA. Disordered regions lie at residues 1-31 and 267-351; these read MAGR…TSSQ and KCQQ…KELF. Positions 52–290 form a coiled coil; that stretch reads RVEVLINRIN…ELEKHGMQVP (239 aa).

The protein belongs to the SYCE family. In terms of assembly, homodimer. Found in a complex with SYCP1 and SYCE2. Interacts with SYCP1, SYCE2 and SYCE3. Interacts with SIX6OS1.

Its subcellular location is the nucleus. The protein localises to the chromosome. Major component of the transverse central element of synaptonemal complexes (SCS), formed between homologous chromosomes during meiotic prophase. Requires SYCP1 in order to be incorporated into the central element. May have a role in the synaptonemal complex assembly, stabilization and recombination. The protein is Synaptonemal complex central element protein 1 (SYCE1) of Homo sapiens (Human).